Reading from the N-terminus, the 205-residue chain is Putative 3-methyladenine DNA glycosylase (205 aa).

It belongs to the DNA glycosylase MPG family.

The protein is Putative 3-methyladenine DNA glycosylase of Bacillus cereus (strain ATCC 10987 / NRS 248).